We begin with the raw amino-acid sequence, 248 residues long: tRNA uridine(34) hydroxylase (248 aa).

The region spanning 124–218 is the Rhodanese domain; it reads TKQDVIVVDT…YLEDTQNKNN (95 aa). C178 serves as the catalytic Cysteine persulfide intermediate.

The protein belongs to the TrhO family.

It carries out the reaction uridine(34) in tRNA + AH2 + O2 = 5-hydroxyuridine(34) in tRNA + A + H2O. Functionally, catalyzes oxygen-dependent 5-hydroxyuridine (ho5U) modification at position 34 in tRNAs. The polypeptide is tRNA uridine(34) hydroxylase (Rickettsia bellii (strain OSU 85-389)).